A 101-amino-acid chain; its full sequence is NAD(P)H-quinone oxidoreductase subunit 4L, chloroplastic (101 aa).

A run of 3 helical transmembrane segments spans residues 2–22 (MLEHVLVLSAYLFSIGIYGLI), 32–52 (MCLELILNAVNMNLVTFSDFF), and 61–81 (IFSIFVIAIAAAEAAIGPAIV).

Belongs to the complex I subunit 4L family. NDH is composed of at least 16 different subunits, 5 of which are encoded in the nucleus.

It localises to the plastid. It is found in the chloroplast thylakoid membrane. The enzyme catalyses a plastoquinone + NADH + (n+1) H(+)(in) = a plastoquinol + NAD(+) + n H(+)(out). The catalysed reaction is a plastoquinone + NADPH + (n+1) H(+)(in) = a plastoquinol + NADP(+) + n H(+)(out). NDH shuttles electrons from NAD(P)H:plastoquinone, via FMN and iron-sulfur (Fe-S) centers, to quinones in the photosynthetic chain and possibly in a chloroplast respiratory chain. The immediate electron acceptor for the enzyme in this species is believed to be plastoquinone. Couples the redox reaction to proton translocation, and thus conserves the redox energy in a proton gradient. In Lotus japonicus (Lotus corniculatus var. japonicus), this protein is NAD(P)H-quinone oxidoreductase subunit 4L, chloroplastic.